The primary structure comprises 311 residues: Mas-related G-protein coupled receptor member E (311 aa).

The Extracellular segment spans residues 1–25 (MEPREAGQHAGAADGAQEDVAFNLV). The helical transmembrane segment at 26–46 (ILSLTEGLGLGGLLGNGAVLW) threads the bilayer. The Cytoplasmic segment spans residues 47 to 63 (LLSSNVYRNPFAIYLLD). The chain crosses the membrane as a helical span at residues 64–84 (VACADLIFLGCHMVAIIPDLL). Residues 85-95 (QGRLDFPGFVQ) lie on the Extracellular side of the membrane. Residues 96-116 (TSLATLRFFCYIVGLSLLVAV) traverse the membrane as a helical segment. Topologically, residues 117-136 (SVEQCLAALFPAWYSCRRPR) are cytoplasmic. The chain crosses the membrane as a helical span at residues 137–157 (HLTTCVCALTWACCLLLHLLL). Topologically, residues 158 to 177 (SGACTQFFGEPSRHLCRTLW) are extracellular. A helical membrane pass occupies residues 178-198 (LVAAVLLAVLCCTMCGASLML). Topologically, residues 199 to 216 (LLQVERGPQRPPPRGFPT) are cytoplasmic. The chain crosses the membrane as a helical span at residues 217–237 (LILLAVLLFLFCGLPFGIYWL). Over 238–251 (SRNLLWHIPHYFYH) the chain is Extracellular. The helical transmembrane segment at 252–272 (FSFLTAAVYCAAKPVVYFCLG) threads the bilayer. Over 273–311 (SAQGRRLPLRLVLQRALGDEAELGAVRETSRRGLVDIAA) the chain is Cytoplasmic.

The protein belongs to the G-protein coupled receptor 1 family. Mas subfamily.

It is found in the cell membrane. Orphan receptor. May regulate nociceptor function and/or development, including the sensation or modulation of pain. The chain is Mas-related G-protein coupled receptor member E (MRGPRE) from Macaca fascicularis (Crab-eating macaque).